We begin with the raw amino-acid sequence, 365 residues long: NAC domain-containing protein 37 (365 aa).

Positions 9–158 constitute an NAC domain; it reads VPPGFRFHPT…GWVVCRAFKK (150 aa). A DNA-binding region spans residues 109–164; sequence IGMRKTLVFYKGRAPNGKKSDWIMHEYRLESDENAPPQEEGWVVCRAFKKRATGQA.

This sequence belongs to the plant vascular related NAC-domain protein family. As to quaternary structure, interacts with NAC030/VND7. In terms of tissue distribution, expressed in root metaxylem pole and in shoot pre-procambium and procambium. Present in root developing xylems. Specifically expressed in vessels but not in interfascicular fibers in stems.

The protein resides in the nucleus. Its function is as follows. Transcription activator that binds to the secondary wall NAC binding element (SNBE), 5'-(T/A)NN(C/T)(T/C/G)TNNNNNNNA(A/C)GN(A/C/T)(A/T)-3', in the promoter of target genes. Involved in xylem formation by promoting the expression of secondary wall-associated transcription factors and of genes involved in secondary wall biosynthesis and programmed cell death, genes driven by the secondary wall NAC binding element (SNBE). Triggers thickening of secondary walls. The polypeptide is NAC domain-containing protein 37 (Arabidopsis thaliana (Mouse-ear cress)).